Here is a 168-residue protein sequence, read N- to C-terminus: Probable chemoreceptor glutamine deamidase CheD (168 aa).

Belongs to the CheD family.

It catalyses the reaction L-glutaminyl-[protein] + H2O = L-glutamyl-[protein] + NH4(+). Functionally, probably deamidates glutamine residues to glutamate on methyl-accepting chemotaxis receptors (MCPs), playing an important role in chemotaxis. This is Probable chemoreceptor glutamine deamidase CheD from Pseudomonas syringae pv. tomato (strain ATCC BAA-871 / DC3000).